The following is a 342-amino-acid chain: S-adenosylmethionine:tRNA ribosyltransferase-isomerase (342 aa).

The protein belongs to the QueA family. In terms of assembly, monomer.

The protein resides in the cytoplasm. It catalyses the reaction 7-aminomethyl-7-carbaguanosine(34) in tRNA + S-adenosyl-L-methionine = epoxyqueuosine(34) in tRNA + adenine + L-methionine + 2 H(+). It functions in the pathway tRNA modification; tRNA-queuosine biosynthesis. Transfers and isomerizes the ribose moiety from AdoMet to the 7-aminomethyl group of 7-deazaguanine (preQ1-tRNA) to give epoxyqueuosine (oQ-tRNA). The protein is S-adenosylmethionine:tRNA ribosyltransferase-isomerase of Campylobacter jejuni subsp. jejuni serotype O:2 (strain ATCC 700819 / NCTC 11168).